The chain runs to 823 residues: Pentatricopeptide repeat-containing protein At4g33990 (823 aa).

PPR repeat units follow at residues 85 to 115, 116 to 151, 152 to 183, 184 to 214, 215 to 249, 252 to 280, 281 to 311, 312 to 346, 347 to 381, 383 to 413, 414 to 448, 450 to 484, 485 to 515, 516 to 550, 551 to 581, and 587 to 617; these read NVCISAKLVNLYCYLGNVALARHTFDHIQNR, DVYAWNLMISGYGRAGNSSEVIRCFSLFMLSSGLTP, DYRTFPSVLKACRTVIDGNKIHCLALKFGFMW, DVYVAASLIHLYSRYKAVGNARILFDEMPVR, DMGSWNAMISGYCQSGNAKEALTLSNGLRAMDSVT, SLLSACTEAGDFNRGVTIHSYSIKHGLES, ELFVSNKLIDLYAEFGRLRDCQKVFDRMYVR, DLISWNSIIKAYELNEQPLRAISLFQEMRLSRIQP, DCLTLISLASILSQLGDIRACRSVQGFTLRKGWFL, DITIGNAVVVMYAKLGLVDSARAVFNWLPNT, DVISWNTIISGYAQNGFASEAIEMYNIMEEEGEIA, NQGTWVSVLPACSQAGALRQGMKLHGRLLKNGLYL, DVFVVTSLADMYGKCGRLEDALSLFYQIPRV, NSVPWNTLIACHGFHGHGEKAVMLFKEMLDEGVKP, DHITFVTLLSACSHSGLVDEGQWCFEMMQTD, and SLKHYGCMVDMYGRAGQLETALKFIKSMSLQ. The type E motif stretch occupies residues 622–697; sequence IWGALLSACR…TPGWSSMEVD (76 aa). Residues 698–728 form a type E(+) motif region; it reads NKVEVFYTGNQTHPMYEEMYRELTALQAKLK. Residues 729–823 form a type DYW motif region; that stretch reads MIGYVPDHRF…NGVCSCGDYW (95 aa).

Belongs to the PPR family. PCMP-H subfamily.

The protein is Pentatricopeptide repeat-containing protein At4g33990 (EMB2758) of Arabidopsis thaliana (Mouse-ear cress).